The primary structure comprises 213 residues: Maleamate amidohydrolase (213 aa).

The active-site Nucleophile is cysteine 154.

Belongs to the isochorismatase family.

The catalysed reaction is maleamate + H2O = maleate + NH4(+). It functions in the pathway cofactor degradation; nicotinate degradation. Functionally, maleamate amidase that transforms maleamate into maleate and ammonia in the aerobic nicotinate degradation pathway. The sequence is that of Maleamate amidohydrolase (nicF) from Pseudomonas putida (strain ATCC 47054 / DSM 6125 / CFBP 8728 / NCIMB 11950 / KT2440).